The chain runs to 129 residues: SOSS complex subunit C homolog (129 aa).

The interval 105-129 is disordered; that stretch reads RLEPLPSPATTPTTPNAPPSHSISK.

It belongs to the SOSS-C family.

The protein is SOSS complex subunit C homolog of Drosophila simulans (Fruit fly).